The sequence spans 873 residues: MSFIMKPHRHFQRTLILLATFCMVSIIISAYYLYSGYKQESEVSGRASEVDCGDLQHIPSRLMEVRRTMISDASRTDPTVLVFVESQYSSLGQDIIMMLESIRFHYHTEIAPGKGDLPALTDNVKGKYVLIIYENILKYINMDSWNRSLLDKYCIEYGVGIIGFHKTSEKNLQSFQFRGFPFSISGNLAVKDCCINPHSPLLRVTKSSKLDRGSLPGTDWTVFQINHSTYQPVIFAKVKTPENLSPPISKHAFYATIIHDLGLHDGIQRVLFGNNLNFWLHKLIFIDAISFLSGKRLTLSLDRYILVDIDDIFVGKEGTRMNTNDVKALLDTQNLLRTQITNFTFNLGFSGKFYHTGTEEEDEGDDCLLGSVDEFWWFPHMWSHMQPHLFHNESSLIEQMILNKKFALEHGIPTDMGYAVSPHHSGVYPVHVQLYEAWKKVWNIKITSTEEYPHLKPARYRRGFIHKNIMVLPRQTCGLFTHTIFYKEYPGGPRELDKSIHGGELFFTVVLNPISIFMTHLSNYGNDRLGLYTFVNLANFVQTWTNLRLQTLPPAQLAHKYFELFPDQKDPLWQNPCDDKRHRDIWSKEKTCDRLPKFLVIGPQKTGTTALCLFLIMHPSILSNSPSPKSFEEVQFFNRNNYHRGIDWYMDFFPVPSNVTTDFLFEKSANYFHSEDAPKRAASLVPKAKIITILIDPSDRAYSWYQHQRSHEDPAALKFSFYEVISAGPNAPWELRTLQKRCLVPGWYANHIERWLVYFPPFQLLIIDGQHLRTTPATVMDEVQKFLGVSPHYNYSEALTFDSHKGFWCQLLEEGKTKCLGKSKGRKYPPMDSDSRAFLSSYYRDHNVELSKLLHRLGQPLPSWLRQELQKVR.

The Cytoplasmic segment spans residues 1–13 (MSFIMKPHRHFQR). Residues 14 to 34 (TLILLATFCMVSIIISAYYLY) traverse the membrane as a helical; Signal-anchor for type II membrane protein segment. Over 35–873 (SGYKQESEVS…WLRQELQKVR (839 aa)) the chain is Lumenal. The heparan sulfate N-deacetylase 3 stretch occupies residues 36-589 (GYKQESEVSG…KRHRDIWSKE (554 aa)). N-linked (GlcNAc...) asparagine glycosylation is found at asparagine 146, asparagine 226, asparagine 342, and asparagine 392. Residues 590–873 (KTCDRLPKFL…WLRQELQKVR (284 aa)) are heparan sulfate N-sulfotransferase 3. The active-site For sulfotransferase activity is lysine 605. 605–609 (KTGTT) contributes to the 3'-phosphoadenylyl sulfate binding site. A glycan (N-linked (GlcNAc...) asparagine) is linked at asparagine 658. Serine 703 is a 3'-phosphoadenylyl sulfate binding site. An N-linked (GlcNAc...) asparagine glycan is attached at asparagine 794. Residues cysteine 809 and cysteine 819 are joined by a disulfide bond. Position 824 to 828 (824 to 828 (KGRKY)) interacts with 3'-phosphoadenylyl sulfate.

Belongs to the sulfotransferase 1 family. NDST subfamily. Monomer. As to expression, strongly expressed strongly in brain. Expressed at high level at embryonic day 11 compared to other stages of development. Weakly expressed in adult heart, kidney, muscle, endothelial cells and testis but not in other tissues.

It is found in the golgi apparatus membrane. It carries out the reaction alpha-D-glucosaminyl-[heparan sulfate](n) + 3'-phosphoadenylyl sulfate = N-sulfo-alpha-D-glucosaminyl-[heparan sulfate](n) + adenosine 3',5'-bisphosphate + 2 H(+). Its pathway is glycan metabolism; heparan sulfate biosynthesis. It functions in the pathway glycan metabolism; heparin biosynthesis. Essential bifunctional enzyme that catalyzes both the N-deacetylation and the N-sulfation of glucosamine (GlcNAc) of the glycosaminoglycan in heparan sulfate. Modifies the GlcNAc-GlcA disaccharide repeating sugar backbone to make N-sulfated heparosan, a prerequisite substrate for later modifications in heparin biosynthesis. Has high deacetylase activity but low sulfotransferase activity. This Mus musculus (Mouse) protein is Bifunctional heparan sulfate N-deacetylase/N-sulfotransferase 3 (Ndst3).